A 705-amino-acid polypeptide reads, in one-letter code: Polyribonucleotide nucleotidyltransferase (705 aa).

Positions 486 and 492 each coordinate Mg(2+). Residues 553–612 (PRIHTIRINPDKIKDVIGKGGSVIRALTEETGTTIEIEDDGTVKIAATDGEKAKFAIRRI) enclose the KH domain. The S1 motif domain occupies 622 to 690 (GRIYQGKVTR…RQGRVRLSIK (69 aa)).

The protein belongs to the polyribonucleotide nucleotidyltransferase family. In terms of assembly, component of the RNA degradosome, which is a multiprotein complex involved in RNA processing and mRNA degradation. The cofactor is Mg(2+).

The protein resides in the cytoplasm. It catalyses the reaction RNA(n+1) + phosphate = RNA(n) + a ribonucleoside 5'-diphosphate. Involved in mRNA degradation. Catalyzes the phosphorolysis of single-stranded polyribonucleotides processively in the 3'- to 5'-direction. This Serratia proteamaculans (strain 568) protein is Polyribonucleotide nucleotidyltransferase.